The chain runs to 158 residues: Transcription elongation factor GreA (158 aa).

A coiled-coil region spans residues 45–72 (AEYHAAREQQSFIEGRIKQLEGELSHAE).

The protein belongs to the GreA/GreB family.

Necessary for efficient RNA polymerase transcription elongation past template-encoded arresting sites. The arresting sites in DNA have the property of trapping a certain fraction of elongating RNA polymerases that pass through, resulting in locked ternary complexes. Cleavage of the nascent transcript by cleavage factors such as GreA or GreB allows the resumption of elongation from the new 3'terminus. GreA releases sequences of 2 to 3 nucleotides. This is Transcription elongation factor GreA from Xylella fastidiosa (strain M12).